The primary structure comprises 132 residues: Small ribosomal subunit protein uS9 (132 aa).

It belongs to the universal ribosomal protein uS9 family.

This is Small ribosomal subunit protein uS9 (rpsI) from Mycoplasma genitalium (strain ATCC 33530 / DSM 19775 / NCTC 10195 / G37) (Mycoplasmoides genitalium).